Reading from the N-terminus, the 301-residue chain is Sulfate adenylyltransferase subunit 2 (301 aa).

The tract at residues 278-301 is disordered; it reads ERQGRLIDGDEPASMERKKREGYF.

This sequence belongs to the PAPS reductase family. CysD subfamily. In terms of assembly, sulfate-activating enzymes, NodP and NodQ, may be physically associated.

It catalyses the reaction sulfate + ATP + H(+) = adenosine 5'-phosphosulfate + diphosphate. In terms of biological role, proposed to provide activated sulfate for transfer to nod factor. This chain is Sulfate adenylyltransferase subunit 2 (nodP), found in Azospirillum brasilense.